Here is a 618-residue protein sequence, read N- to C-terminus: Proline--tRNA ligase (618 aa).

This sequence belongs to the class-II aminoacyl-tRNA synthetase family. ProS type 1 subfamily. Homodimer.

Its subcellular location is the cytoplasm. The catalysed reaction is tRNA(Pro) + L-proline + ATP = L-prolyl-tRNA(Pro) + AMP + diphosphate. Catalyzes the attachment of proline to tRNA(Pro) in a two-step reaction: proline is first activated by ATP to form Pro-AMP and then transferred to the acceptor end of tRNA(Pro). As ProRS can inadvertently accommodate and process non-cognate amino acids such as alanine and cysteine, to avoid such errors it has two additional distinct editing activities against alanine. One activity is designated as 'pretransfer' editing and involves the tRNA(Pro)-independent hydrolysis of activated Ala-AMP. The other activity is designated 'posttransfer' editing and involves deacylation of mischarged Ala-tRNA(Pro). The misacylated Cys-tRNA(Pro) is not edited by ProRS. This is Proline--tRNA ligase from Streptococcus pyogenes serotype M2 (strain MGAS10270).